The primary structure comprises 276 residues: Secreted RxLR effector protein 85 (276 aa).

The N-terminal stretch at 1-27 (MRYCAFRLGLFFIGYSCCVLLSTPTLA) is a signal peptide. The short motif at 110–113 (RQLR) is the RxLR element.

This sequence belongs to the RxLR effector family.

The protein localises to the secreted. It localises to the host cell membrane. Functionally, secreted effector that partially suppresses the host cell death induced by cell death-inducing proteins. This is Secreted RxLR effector protein 85 from Plasmopara viticola (Downy mildew of grapevine).